The following is a 253-amino-acid chain: Sulfur carrier protein FdhD (253 aa).

Cys-100 (cysteine persulfide intermediate) is an active-site residue.

It belongs to the FdhD family.

It is found in the cytoplasm. In terms of biological role, required for formate dehydrogenase (FDH) activity. Acts as a sulfur carrier protein that transfers sulfur from IscS to the molybdenum cofactor prior to its insertion into FDH. This Sulfolobus acidocaldarius (strain ATCC 33909 / DSM 639 / JCM 8929 / NBRC 15157 / NCIMB 11770) protein is Sulfur carrier protein FdhD.